The following is a 222-amino-acid chain: Pectate lyase A (222 aa).

The first 26 residues, 1–26 (MKKMLTLLLSAGLVASIFGVMPAAAA), serve as a signal peptide directing secretion.

Belongs to the polysaccharide lyase 3 family. Requires Ca(2+) as cofactor.

It is found in the secreted. It catalyses the reaction Eliminative cleavage of (1-&gt;4)-alpha-D-galacturonan to give oligosaccharides with 4-deoxy-alpha-D-galact-4-enuronosyl groups at their non-reducing ends.. It carries out the reaction Eliminative cleavage of (1-&gt;4)-alpha-D-galacturonan methyl ester to give oligosaccharides with 4-deoxy-6-O-methyl-alpha-D-galact-4-enuronosyl groups at their non-reducing ends.. It participates in glycan metabolism; pectin degradation. In terms of biological role, catalyzes the depolymerization of both polygalacturonate and pectins with low (20-34%) and high (90%) levels of methyl esterification, with an endo mode of action. In contrast to the majority of pectate lyases, displays high activity on highly methylated pectins. Does not show xylanase and cellulase activity. The protein is Pectate lyase A of Paenibacillus amylolyticus.